Here is a 586-residue protein sequence, read N- to C-terminus: Arginine--tRNA ligase (586 aa).

The 'HIGH' region signature appears at 131 to 141 (ANPTGPLHVGH).

The protein belongs to the class-I aminoacyl-tRNA synthetase family. Monomer.

Its subcellular location is the cytoplasm. The catalysed reaction is tRNA(Arg) + L-arginine + ATP = L-arginyl-tRNA(Arg) + AMP + diphosphate. The chain is Arginine--tRNA ligase from Nitrosomonas europaea (strain ATCC 19718 / CIP 103999 / KCTC 2705 / NBRC 14298).